The primary structure comprises 322 residues: ATP-dependent 6-phosphofructokinase (322 aa).

G13 contacts ATP. 23-27 is an ADP binding site; it reads RAVVR. ATP-binding positions include 74–75 and 104–107; these read RC and GDGS. Residue D105 coordinates Mg(2+). Residue 127-129 participates in substrate binding; the sequence is TID. The active-site Proton acceptor is D129. ADP is bound at residue R156. Residues R164 and 171–173 each bind substrate; that span reads MGR. Residues 187–189 and 215–217 each bind ADP; these read GAE and KRH. Substrate-binding positions include E224, R246, and 252–255; that span reads HIQR.

This sequence belongs to the phosphofructokinase type A (PFKA) family. ATP-dependent PFK group I subfamily. Prokaryotic clade 'B1' sub-subfamily. Homotetramer. Mg(2+) serves as cofactor.

The protein localises to the cytoplasm. The enzyme catalyses beta-D-fructose 6-phosphate + ATP = beta-D-fructose 1,6-bisphosphate + ADP + H(+). It functions in the pathway carbohydrate degradation; glycolysis; D-glyceraldehyde 3-phosphate and glycerone phosphate from D-glucose: step 3/4. Its activity is regulated as follows. Allosterically activated by ADP and other diphosphonucleosides, and allosterically inhibited by phosphoenolpyruvate. Its function is as follows. Catalyzes the phosphorylation of D-fructose 6-phosphate to fructose 1,6-bisphosphate by ATP, the first committing step of glycolysis. In Paenibacillus macquariensis (Bacillus macquariensis), this protein is ATP-dependent 6-phosphofructokinase.